The sequence spans 969 residues: Isoleucine--tRNA ligase (969 aa).

Residues 68-78 (PYANGNLHMGH) carry the 'HIGH' region motif. Residue E584 participates in L-isoleucyl-5'-AMP binding. The 'KMSKS' region motif lies at 625–629 (KMSKS). K628 contributes to the ATP binding site. Positions 938, 941, 958, and 961 each coordinate Zn(2+).

The protein belongs to the class-I aminoacyl-tRNA synthetase family. IleS type 1 subfamily. As to quaternary structure, monomer. Zn(2+) serves as cofactor.

Its subcellular location is the cytoplasm. The enzyme catalyses tRNA(Ile) + L-isoleucine + ATP = L-isoleucyl-tRNA(Ile) + AMP + diphosphate. Catalyzes the attachment of isoleucine to tRNA(Ile). As IleRS can inadvertently accommodate and process structurally similar amino acids such as valine, to avoid such errors it has two additional distinct tRNA(Ile)-dependent editing activities. One activity is designated as 'pretransfer' editing and involves the hydrolysis of activated Val-AMP. The other activity is designated 'posttransfer' editing and involves deacylation of mischarged Val-tRNA(Ile). The sequence is that of Isoleucine--tRNA ligase from Prochlorococcus marinus (strain SARG / CCMP1375 / SS120).